The primary structure comprises 372 residues: Mannan endo-1,4-beta-mannosidase 8 (372 aa).

Substrate-binding residues include W57 and N172. E173 (proton donor) is an active-site residue. Y253 is a binding site for substrate. The Nucleophile role is filled by E293. W335 contributes to the substrate binding site.

The protein belongs to the glycosyl hydrolase 5 (cellulase A) family. In terms of tissue distribution, expressed in stems and leaves and seeds.

It catalyses the reaction Random hydrolysis of (1-&gt;4)-beta-D-mannosidic linkages in mannans, galactomannans and glucomannans.. This is Mannan endo-1,4-beta-mannosidase 8 (MAN8) from Oryza sativa subsp. japonica (Rice).